We begin with the raw amino-acid sequence, 76 residues long: uORF2 protein (76 aa).

Plays a role in viral replication. The protein is uORF2 protein of Zika virus (isolate ZIKV/Human/French Polynesia/10087PF/2013) (ZIKV).